The primary structure comprises 311 residues: Transmembrane protein DDB_G0273707/DDB_G0273361 (311 aa).

The interval 1–113 (MNEIEVDNLS…NNNNNKNENN (113 aa)) is disordered. N-linked (GlcNAc...) asparagine glycosylation occurs at N8. A compositionally biased stretch (polar residues) spans 9-18 (LSHTNKNVAT). N-linked (GlcNAc...) asparagine glycosylation is found at N35, N38, N62, and N76. Composition is skewed to low complexity over residues 37 to 67 (SNNS…SNSN) and 76 to 111 (NNSN…NKNE). A coiled-coil region spans residues 95–124 (NNNNNNNNNNNNNNKNENNNKIKNEKINIL). 5 consecutive transmembrane segments (helical) span residues 150-170 (LEEI…LALL), 181-201 (IFLL…PKSP), 208-228 (LVLG…ALVY), 235-255 (VACA…KSIH), and 276-296 (FYYI…TALI).

It is found in the membrane. This is Transmembrane protein DDB_G0273707/DDB_G0273361 from Dictyostelium discoideum (Social amoeba).